We begin with the raw amino-acid sequence, 25 residues long: Histone H1.1 (25 aa).

In terms of domain architecture, H15 spans Met-1–Glu-25. Positions Met-1–Glu-25 are disordered. Residues Leu-9–Glu-25 are compositionally biased toward basic and acidic residues.

The protein localises to the nucleus. Its subcellular location is the chromosome. Its function is as follows. Histones H1 are necessary for the condensation of nucleosome chains into higher-order structures. This chain is Histone H1.1, found in Triticum aestivum (Wheat).